The primary structure comprises 95 residues: Blastocyst protein 4 (95 aa).

An N-terminal signal peptide occupies residues 1-20; the sequence is MGAVFAIIGGFALDSPILRL.

This Oryctolagus cuniculus (Rabbit) protein is Blastocyst protein 4.